The primary structure comprises 191 residues: Elongation factor P (191 aa).

The protein belongs to the elongation factor P family.

The protein localises to the cytoplasm. Its pathway is protein biosynthesis; polypeptide chain elongation. Functionally, involved in peptide bond synthesis. Stimulates efficient translation and peptide-bond synthesis on native or reconstituted 70S ribosomes in vitro. Probably functions indirectly by altering the affinity of the ribosome for aminoacyl-tRNA, thus increasing their reactivity as acceptors for peptidyl transferase. This chain is Elongation factor P, found in Bartonella henselae (strain ATCC 49882 / DSM 28221 / CCUG 30454 / Houston 1) (Rochalimaea henselae).